Here is a 386-residue protein sequence, read N- to C-terminus: Phosphatidyl-myo-inositol mannosyltransferase (386 aa).

GDP-alpha-D-mannose-binding residues include Y9 and G16. A 1,2-diacyl-sn-glycero-3-phospho-(1D-myo-inositol)-binding positions include Q18, 62–63 (YN), and R68. Residues R196, 201-202 (RK), 251-253 (VDD), K256, 274-278 (ESFGI), and E282 contribute to the GDP-alpha-D-mannose site.

The protein belongs to the glycosyltransferase group 1 family. Glycosyltransferase 4 subfamily. Monomer. Requires Mg(2+) as cofactor.

The protein localises to the cell membrane. The catalysed reaction is a 1,2-diacyl-sn-glycero-3-phospho-(1D-myo-inositol) + GDP-alpha-D-mannose = a 1,2-diacyl-sn-glycero-3-phospho-[alpha-D-mannopyranosyl-(1&lt;-&gt;6)-D-myo-inositol] + GDP + H(+). Its pathway is phospholipid metabolism; phosphatidylinositol metabolism. Functionally, involved in the biosynthesis of phosphatidyl-myo-inositol mannosides (PIM) which are early precursors in the biosynthesis of lipomannans (LM) and lipoarabinomannans (LAM). Catalyzes the addition of a mannosyl residue from GDP-D-mannose (GDP-Man) to the position 2 of the carrier lipid phosphatidyl-myo-inositol (PI) to generate a phosphatidyl-myo-inositol bearing an alpha-1,2-linked mannose residue (PIM1). In contrary to PimB, the mannosyltransferase PimA is unable to transfer a mannose residue to the position 6 of the phosphatidyl-myo-inositol of PIM1. The sequence is that of Phosphatidyl-myo-inositol mannosyltransferase from Mycolicibacterium smegmatis (strain ATCC 700084 / mc(2)155) (Mycobacterium smegmatis).